Reading from the N-terminus, the 45-residue chain is Non-specific lipid-transfer protein (45 aa).

Belongs to the plant LTP family. In terms of tissue distribution, expressed in pollen.

Functionally, plant non-specific lipid-transfer proteins transfer phospholipids as well as galactolipids across membranes. May play a role in wax or cutin deposition in the cell walls of expanding epidermal cells and certain secretory tissues. The sequence is that of Non-specific lipid-transfer protein from Broussonetia papyrifera (Paper mulberry).